The sequence spans 486 residues: Membrane-bound lytic murein transglycosylase F (486 aa).

The N-terminal stretch at 1-29 (MFSPTALRPRYAKWLIATGLFLMLSGCVD) is a signal peptide. A non-LT domain region spans residues 30-267 (KPNTLERVKE…RLKDRYYGHV (238 aa)). The interval 268 to 486 (DVLGYMGATT…SKPAQEPAPL (219 aa)) is LT domain. Residue glutamate 314 is part of the active site.

The protein in the N-terminal section; belongs to the bacterial solute-binding protein 3 family. In the C-terminal section; belongs to the transglycosylase Slt family.

Its subcellular location is the cell outer membrane. The catalysed reaction is Exolytic cleavage of the (1-&gt;4)-beta-glycosidic linkage between N-acetylmuramic acid (MurNAc) and N-acetylglucosamine (GlcNAc) residues in peptidoglycan, from either the reducing or the non-reducing ends of the peptidoglycan chains, with concomitant formation of a 1,6-anhydrobond in the MurNAc residue.. Murein-degrading enzyme that degrades murein glycan strands and insoluble, high-molecular weight murein sacculi, with the concomitant formation of a 1,6-anhydromuramoyl product. Lytic transglycosylases (LTs) play an integral role in the metabolism of the peptidoglycan (PG) sacculus. Their lytic action creates space within the PG sacculus to allow for its expansion as well as for the insertion of various structures such as secretion systems and flagella. The polypeptide is Membrane-bound lytic murein transglycosylase F (Pseudomonas fluorescens (strain Pf0-1)).